The following is a 677-amino-acid chain: Epithelial splicing regulatory protein 1 (677 aa).

RRM domains follow at residues 225–302 (TVVR…KATG), 326–406 (VIVR…RSTA), and 445–525 (DCVR…QCSA). The residue at position 543 (Ser-543) is a Phosphoserine. Arg-578 bears the Omega-N-methylarginine mark.

This sequence belongs to the ESRP family.

The protein resides in the nucleus. In terms of biological role, mRNA splicing factor that regulates the formation of epithelial cell-specific isoforms. Specifically regulates the expression of FGFR2-IIIb, an epithelial cell-specific isoform of FGFR2. Also regulates the splicing of CD44, CTNND1, ENAH, 3 transcripts that undergo changes in splicing during the epithelial-to-mesenchymal transition (EMT). Acts by directly binding specific sequences in mRNAs. Binds the GU-rich sequence motifs in the ISE/ISS-3, a cis-element regulatory region present in the mRNA of FGFR2. Regulates splicing and expression of genes involved in inner ear development, auditory hair cell differentiation, and cell fate specification in the cochlear epithelium. This Rattus norvegicus (Rat) protein is Epithelial splicing regulatory protein 1 (Esrp1).